A 182-amino-acid polypeptide reads, in one-letter code: Fimbrial subunit type 1 (182 aa).

A signal peptide spans Met1–Ala23. Cys44 and Cys84 are oxidised to a cystine.

It belongs to the fimbrial protein family.

Its subcellular location is the fimbrium. The protein is Fimbrial subunit type 1 of Klebsiella pneumoniae.